The primary structure comprises 239 residues: Ribonuclease 3 (239 aa).

The 124-residue stretch at 18-141 (YLTLEKALGY…LMAGVYLEAG (124 aa)) folds into the RNase III domain. Glu54 contributes to the Mg(2+) binding site. Asp58 is an active-site residue. Positions 127 and 130 each coordinate Mg(2+). The active site involves Glu130. The region spanning 168-237 (DYKTALQELT…AYQALQKLKE (70 aa)) is the DRBM domain.

This sequence belongs to the ribonuclease III family. In terms of assembly, homodimer. Mg(2+) serves as cofactor.

The protein localises to the cytoplasm. The enzyme catalyses Endonucleolytic cleavage to 5'-phosphomonoester.. Its function is as follows. Digests double-stranded RNA. Involved in the processing of primary rRNA transcript to yield the immediate precursors to the large and small rRNAs (23S and 16S). Processes some mRNAs, and tRNAs when they are encoded in the rRNA operon. Processes pre-crRNA and tracrRNA of type II CRISPR loci if present in the organism. The polypeptide is Ribonuclease 3 (Helicobacter pylori (strain J99 / ATCC 700824) (Campylobacter pylori J99)).